The primary structure comprises 37 residues: Large ribosomal subunit protein bL36 (37 aa).

It belongs to the bacterial ribosomal protein bL36 family.

The sequence is that of Large ribosomal subunit protein bL36 from Cyanothece sp. (strain PCC 7425 / ATCC 29141).